The following is a 149-amino-acid chain: D-aminoacyl-tRNA deacylase (149 aa).

The short motif at 137-138 is the Gly-cisPro motif, important for rejection of L-amino acids element; sequence GP.

Belongs to the DTD family. As to quaternary structure, homodimer.

It is found in the cytoplasm. The catalysed reaction is glycyl-tRNA(Ala) + H2O = tRNA(Ala) + glycine + H(+). It catalyses the reaction a D-aminoacyl-tRNA + H2O = a tRNA + a D-alpha-amino acid + H(+). An aminoacyl-tRNA editing enzyme that deacylates mischarged D-aminoacyl-tRNAs. Also deacylates mischarged glycyl-tRNA(Ala), protecting cells against glycine mischarging by AlaRS. Acts via tRNA-based rather than protein-based catalysis; rejects L-amino acids rather than detecting D-amino acids in the active site. By recycling D-aminoacyl-tRNA to D-amino acids and free tRNA molecules, this enzyme counteracts the toxicity associated with the formation of D-aminoacyl-tRNA entities in vivo and helps enforce protein L-homochirality. This Clostridium kluyveri (strain ATCC 8527 / DSM 555 / NBRC 12016 / NCIMB 10680 / K1) protein is D-aminoacyl-tRNA deacylase.